The chain runs to 1350 residues: Nidogen (1350 aa).

Positions 1-22 (MPTFGSKLLACLLLSSVILVSG) are cleaved as a signal peptide. An NIDO domain is found at 107–260 (AFYSNVDTSF…GVWLFEVAPI (154 aa)). N-linked (GlcNAc...) asparagine glycosylation is present at Asn-231. Residues 281–321 (LALSCQAHAHQCHEKAECHDKAEGYCCVCGSGFYGNGKSCL) form the EGF-like 1 domain. 3 cysteine pairs are disulfide-bonded: Cys-285-Cys-298, Cys-292-Cys-307, and Cys-309-Cys-320. In terms of domain architecture, Nidogen G2 beta-barrel spans 325 to 550 (QPIRVTGTLT…GVTPESNACN (226 aa)). N-linked (GlcNAc...) asparagine glycans are attached at residues Asn-423 and Asn-480. The EGF-like 2 domain maps to 545–583 (ESNACNDGTADCVENSVCVPYEDTYRCDCYHGFAAQLDE). 5 disulfides stabilise this stretch: Cys-549–Cys-562, Cys-556–Cys-571, Cys-595–Cys-608, Cys-602–Cys-617, and Cys-619–Cys-630. Residues 591-631 (DIDECATGSHVCDENAVCDNTEGGFNCYCTEGFEGNGYRCL) form the EGF-like 3; calcium-binding domain. N-linked (GlcNAc...) asparagine glycosylation occurs at Asn-633. Residues 645 to 691 (VEGQAEPTSEPSPNPSPYPDQGQDQEREREDDQYPQPNPYPYPEEQI) are disordered. EGF-like domains follow at residues 788–829 (DLIP…YNCD), 832–874 (SDDS…FNCQ), 912–953 (PAGR…TGCT), 955–996 (KPLS…YVCI), and 997–1037 (EEQN…SLCQ). 15 disulfides stabilise this stretch: Cys-792/Cys-804, Cys-798/Cys-815, Cys-817/Cys-828, Cys-836/Cys-849, Cys-843/Cys-860, Cys-862/Cys-873, Cys-916/Cys-927, Cys-921/Cys-938, Cys-940/Cys-952, Cys-959/Cys-971, Cys-965/Cys-982, Cys-984/Cys-995, Cys-1001/Cys-1014, Cys-1008/Cys-1023, and Cys-1025/Cys-1036. Asn-801 carries N-linked (GlcNAc...) asparagine glycosylation. Asn-1032 is a glycosylation site (N-linked (GlcNAc...) asparagine). 4 LDL-receptor class B repeats span residues 1084–1126 (GRVY…DVIS), 1127–1170 (RRLY…DPYR), 1171–1216 (EKLF…LENS), and 1257–1282 (DQFY…QTPI).

As to expression, expressed in the basement membrane around the follicular epithelium of the adult ovary (at protein level).

The protein resides in the secreted. It localises to the extracellular space. The protein localises to the extracellular matrix. It is found in the basement membrane. In terms of biological role, cell adhesion glycoprotein which is widely distributed in basement membranes. Involved in cell-extracellular matrix (ECM) interactions probably by connecting the laminin and collagen IV networks. Required for permeability and mechanical stability of basement membranes, and ECM dependent neural plasticity. Not involved in assembly of the embryonic basement membrane. The protein is Nidogen of Drosophila melanogaster (Fruit fly).